The primary structure comprises 199 residues: NAD(P)H dehydrogenase (quinone) (199 aa).

One can recognise a Flavodoxin-like domain in the interval 4 to 190; sequence VLVLYYSAYG…EAAKYQGAHV (187 aa). FMN-binding positions include 10–15 and 78–80; these read SAYGHI and TRF. Tyrosine 12 is a binding site for NAD(+). Residue tryptophan 98 participates in substrate binding. FMN-binding positions include 113 to 119 and histidine 134; that span reads SSATQHG.

It belongs to the WrbA family. It depends on FMN as a cofactor.

The enzyme catalyses a quinone + NADH + H(+) = a quinol + NAD(+). The catalysed reaction is a quinone + NADPH + H(+) = a quinol + NADP(+). This chain is NAD(P)H dehydrogenase (quinone), found in Rhizobium rhizogenes (strain K84 / ATCC BAA-868) (Agrobacterium radiobacter).